The primary structure comprises 156 residues: Probable cyclic pyranopterin monophosphate synthase (156 aa).

109–110 (MD) is a binding site for substrate. The active site involves Asp124.

The protein belongs to the MoaC family. Homohexamer; trimer of dimers.

It catalyses the reaction (8S)-3',8-cyclo-7,8-dihydroguanosine 5'-triphosphate = cyclic pyranopterin phosphate + diphosphate. Its pathway is cofactor biosynthesis; molybdopterin biosynthesis. Functionally, catalyzes the conversion of (8S)-3',8-cyclo-7,8-dihydroguanosine 5'-triphosphate to cyclic pyranopterin monophosphate (cPMP). This is Probable cyclic pyranopterin monophosphate synthase from Methanopyrus kandleri (strain AV19 / DSM 6324 / JCM 9639 / NBRC 100938).